The chain runs to 333 residues: tRNA(Ile)-lysidine synthase (333 aa).

33–38 serves as a coordination point for ATP; sequence SGGADS.

It belongs to the tRNA(Ile)-lysidine synthase family.

It localises to the cytoplasm. The catalysed reaction is cytidine(34) in tRNA(Ile2) + L-lysine + ATP = lysidine(34) in tRNA(Ile2) + AMP + diphosphate + H(+). Functionally, ligates lysine onto the cytidine present at position 34 of the AUA codon-specific tRNA(Ile) that contains the anticodon CAU, in an ATP-dependent manner. Cytidine is converted to lysidine, thus changing the amino acid specificity of the tRNA from methionine to isoleucine. In Salinispora tropica (strain ATCC BAA-916 / DSM 44818 / JCM 13857 / NBRC 105044 / CNB-440), this protein is tRNA(Ile)-lysidine synthase.